A 360-amino-acid polypeptide reads, in one-letter code: Probable cinnamyl alcohol dehydrogenase 1 (360 aa).

Cysteine 47 is a Zn(2+) binding site. An NADP(+)-binding site is contributed by threonine 49. Zn(2+) is bound by residues histidine 69, glutamate 70, cysteine 100, cysteine 103, cysteine 106, cysteine 114, and cysteine 163. NADP(+)-binding positions include threonine 167, glycine 189–glycine 194, serine 212–lysine 217, threonine 252, glycine 276, and serine 299–isoleucine 301.

It belongs to the zinc-containing alcohol dehydrogenase family. As to quaternary structure, homodimer. Requires Zn(2+) as cofactor.

The enzyme catalyses (E)-cinnamyl alcohol + NADP(+) = (E)-cinnamaldehyde + NADPH + H(+). It carries out the reaction (E)-coniferol + NADP(+) = (E)-coniferaldehyde + NADPH + H(+). The catalysed reaction is (E)-sinapyl alcohol + NADP(+) = (E)-sinapaldehyde + NADPH + H(+). It catalyses the reaction (E)-4-coumaroyl alcohol + NADP(+) = (E)-4-coumaraldehyde + NADPH + H(+). The enzyme catalyses (E)-caffeyl alcohol + NADP(+) = (E)-caffeyl aldehyde + NADPH + H(+). It functions in the pathway aromatic compound metabolism; phenylpropanoid biosynthesis. In terms of biological role, involved in lignin biosynthesis. Catalyzes the final step specific for the production of lignin monomers. Catalyzes the NADPH-dependent reduction of coniferaldehyde, 5-hydroxyconiferaldehyde, sinapaldehyde, 4-coumaraldehyde and caffeyl aldehyde to their respective alcohols. The sequence is that of Probable cinnamyl alcohol dehydrogenase 1 (CAD1) from Aralia cordata (Udo).